Here is a 351-residue protein sequence, read N- to C-terminus: Glucose 1-dehydrogenase 1 (351 aa).

A Zn(2+)-binding site is contributed by cysteine 39. Substrate is bound at residue threonine 41. 2 residues coordinate Zn(2+): histidine 64 and glutamate 65. Glutamate 113 and glutamate 149 together coordinate substrate. A Zn(2+)-binding site is contributed by glutamate 149. NADP(+) is bound by residues 182–185 (AGPI), 265–267 (LGI), and 292–294 (ATN). Residue asparagine 294 coordinates substrate.

It belongs to the zinc-containing alcohol dehydrogenase family. Glucose 1-dehydrogenase subfamily. It depends on Zn(2+) as a cofactor.

The catalysed reaction is D-glucose + NAD(+) = D-glucono-1,5-lactone + NADH + H(+). It carries out the reaction D-glucose + NADP(+) = D-glucono-1,5-lactone + NADPH + H(+). In terms of biological role, catalyzes the NAD(P)(+)-dependent oxidation of D-glucose to D-gluconate via gluconolactone. Can utilize both NAD(+) and NADP(+) as electron acceptor. Is involved in the degradation of glucose through a non-phosphorylative variant of the Entner-Doudoroff pathway. The protein is Glucose 1-dehydrogenase 1 of Vulcanisaeta moutnovskia (strain 768-28).